A 38-amino-acid chain; its full sequence is Large ribosomal subunit protein bL36 (38 aa).

This sequence belongs to the bacterial ribosomal protein bL36 family.

The chain is Large ribosomal subunit protein bL36 from Chloroherpeton thalassium (strain ATCC 35110 / GB-78).